The primary structure comprises 91 residues: Probable Fe(2+)-trafficking protein (91 aa).

This sequence belongs to the Fe(2+)-trafficking protein family. Monomer.

In terms of biological role, could be a mediator in iron transactions between iron acquisition and iron-requiring processes, such as synthesis and/or repair of Fe-S clusters in biosynthetic enzymes. The chain is Probable Fe(2+)-trafficking protein from Salmonella agona (strain SL483).